A 354-amino-acid polypeptide reads, in one-letter code: Glycerol-3-phosphate dehydrogenase [NAD(P)+] (354 aa).

NADPH-binding residues include serine 27, phenylalanine 28, arginine 48, and lysine 121. Positions 121 and 149 each coordinate sn-glycerol 3-phosphate. Residue alanine 153 participates in NADPH binding. Residues lysine 204, aspartate 257, serine 267, arginine 268, and asparagine 269 each coordinate sn-glycerol 3-phosphate. Lysine 204 acts as the Proton acceptor in catalysis. Arginine 268 provides a ligand contact to NADPH. Valine 292 and glutamate 294 together coordinate NADPH.

It belongs to the NAD-dependent glycerol-3-phosphate dehydrogenase family.

The protein localises to the cytoplasm. The enzyme catalyses sn-glycerol 3-phosphate + NAD(+) = dihydroxyacetone phosphate + NADH + H(+). It carries out the reaction sn-glycerol 3-phosphate + NADP(+) = dihydroxyacetone phosphate + NADPH + H(+). The protein operates within membrane lipid metabolism; glycerophospholipid metabolism. Catalyzes the reduction of the glycolytic intermediate dihydroxyacetone phosphate (DHAP) to sn-glycerol 3-phosphate (G3P), the key precursor for phospholipid synthesis. The chain is Glycerol-3-phosphate dehydrogenase [NAD(P)+] from Pseudomonas fluorescens (strain Pf0-1).